A 240-amino-acid chain; its full sequence is Ribosomal RNA large subunit methyltransferase E (240 aa).

Residues 1-20 show a composition bias toward gly residues; that stretch reads MSKAGGNKGGSRTGGRGGAG. Residues 1-40 form a disordered region; sequence MSKAGGNKGGSRTGGRGGAGSSNLHVRVKKKAGTTKESSR. S-adenosyl-L-methionine-binding residues include Gly92, Trp94, Asp115, Asp131, and Asp155. Lys195 serves as the catalytic Proton acceptor.

The protein belongs to the class I-like SAM-binding methyltransferase superfamily. RNA methyltransferase RlmE family.

The protein resides in the cytoplasm. The catalysed reaction is uridine(2552) in 23S rRNA + S-adenosyl-L-methionine = 2'-O-methyluridine(2552) in 23S rRNA + S-adenosyl-L-homocysteine + H(+). In terms of biological role, specifically methylates the uridine in position 2552 of 23S rRNA at the 2'-O position of the ribose in the fully assembled 50S ribosomal subunit. This chain is Ribosomal RNA large subunit methyltransferase E, found in Brucella ovis (strain ATCC 25840 / 63/290 / NCTC 10512).